The chain runs to 197 residues: Phosphoheptose isomerase (197 aa).

The SIS domain occupies 36 to 197 (MVNALLNEGK…IDSQLFGSEE (162 aa)). 51-53 (NGG) contacts substrate. Positions 60 and 64 each coordinate Zn(2+). Substrate is bound by residues glutamate 64, 93–94 (ND), 119–121 (STS), serine 124, and glutamine 174. Zn(2+)-binding residues include glutamine 174 and histidine 182.

The protein belongs to the SIS family. GmhA subfamily. As to quaternary structure, homotetramer. Requires Zn(2+) as cofactor.

It localises to the cytoplasm. It carries out the reaction 2 D-sedoheptulose 7-phosphate = D-glycero-alpha-D-manno-heptose 7-phosphate + D-glycero-beta-D-manno-heptose 7-phosphate. It functions in the pathway carbohydrate biosynthesis; D-glycero-D-manno-heptose 7-phosphate biosynthesis; D-glycero-alpha-D-manno-heptose 7-phosphate and D-glycero-beta-D-manno-heptose 7-phosphate from sedoheptulose 7-phosphate: step 1/1. Functionally, catalyzes the isomerization of sedoheptulose 7-phosphate in D-glycero-D-manno-heptose 7-phosphate. The protein is Phosphoheptose isomerase of Pseudomonas putida (strain GB-1).